Consider the following 373-residue polypeptide: Ribosomal protein uL16 3-hydroxylase (373 aa).

Residues 92 to 219 (PTAALMRPFR…LISGFADYVL (128 aa)) form the JmjC domain. Substrate contacts are provided by residues Ser114, 125–127 (HLD), Arg140, and His187. Residues His125 and Asp127 each coordinate Fe cation. His187 contacts Fe cation.

Belongs to the ROX family. RoxA/YcfD subfamily. As to quaternary structure, homodimer. Fe(2+) is required as a cofactor.

It catalyses the reaction L-arginyl-[ribosomal protein uL16] + 2-oxoglutarate + O2 = (3R)-3-hydroxy-L-arginyl-[ribosomal protein uL16] + succinate + CO2. Growth-regulating oxygenase that catalyzes the hydroxylation of ribosomal protein uL16 on 'Arg-81'. This Escherichia coli (strain K12) protein is Ribosomal protein uL16 3-hydroxylase (roxA).